The primary structure comprises 499 residues: Proline dehydrogenase 1, mitochondrial (499 aa).

The transit peptide at 1–72 (MATRLLRTNF…LDLSDQARLF (72 aa)) directs the protein to the mitochondrion.

It belongs to the proline oxidase family. Requires FAD as cofactor. Ubiquitous. Highest expression in pollen grains, in the stigma and in developing embryos.

Its subcellular location is the mitochondrion. The catalysed reaction is L-proline + a quinone = (S)-1-pyrroline-5-carboxylate + a quinol + H(+). The protein operates within amino-acid degradation; L-proline degradation into L-glutamate; L-glutamate from L-proline: step 1/2. Converts proline to delta-1-pyrroline-5-carboxylate. This Arabidopsis thaliana (Mouse-ear cress) protein is Proline dehydrogenase 1, mitochondrial (POX1).